Consider the following 403-residue polypeptide: Na(+)-translocating NADH-quinone reductase subunit B (403 aa).

Transmembrane regions (helical) follow at residues 56–76 (MMITVWLCTFPAMFFGMWNTG), 121–141 (AYFLPVYAVTFIVGGFWEVLF), 163–183 (ILPPSIPLWQVALGISFGVVI), 220–240 (WTAVDGFAGATSLSLAASGGI), 265–285 (TSTLAIAIGGLVLLITKIASW), 287–307 (IVSGVMLGMIGLSLLLNLIGS), 312–332 (MFAMPWYWHLVVGGFAFGMFF), 348–368 (WIFGALIGVMVVLIRVVNPAF), and 371–391 (GMMLAILFANLFAPLIDHFVV). Position 230 is an FMN phosphoryl threonine (Thr230).

The protein belongs to the NqrB/RnfD family. In terms of assembly, composed of six subunits; NqrA, NqrB, NqrC, NqrD, NqrE and NqrF. Requires FMN as cofactor.

The protein resides in the cell inner membrane. It catalyses the reaction a ubiquinone + n Na(+)(in) + NADH + H(+) = a ubiquinol + n Na(+)(out) + NAD(+). Functionally, NQR complex catalyzes the reduction of ubiquinone-1 to ubiquinol by two successive reactions, coupled with the transport of Na(+) ions from the cytoplasm to the periplasm. NqrA to NqrE are probably involved in the second step, the conversion of ubisemiquinone to ubiquinol. This Ectopseudomonas mendocina (strain ymp) (Pseudomonas mendocina) protein is Na(+)-translocating NADH-quinone reductase subunit B.